A 464-amino-acid chain; its full sequence is Soluble pyridine nucleotide transhydrogenase (464 aa).

An FAD-binding site is contributed by 35 to 44 (DNRPLVGGNC).

The protein belongs to the class-I pyridine nucleotide-disulfide oxidoreductase family. The cofactor is FAD.

The protein resides in the cytoplasm. It carries out the reaction NAD(+) + NADPH = NADH + NADP(+). Functionally, conversion of NADPH, generated by peripheral catabolic pathways, to NADH, which can enter the respiratory chain for energy generation. The chain is Soluble pyridine nucleotide transhydrogenase from Ectopseudomonas mendocina (strain ymp) (Pseudomonas mendocina).